Here is a 349-residue protein sequence, read N- to C-terminus: Glycerol-3-phosphate dehydrogenase [NAD(P)+] (349 aa).

Residues Ser-12, Trp-13, and Lys-107 each contribute to the NADPH site. The sn-glycerol 3-phosphate site is built by Lys-107, Gly-138, and Ser-140. Residue Ala-142 coordinates NADPH. Sn-glycerol 3-phosphate-binding residues include Lys-193, Asp-246, Ser-256, Arg-257, and Asn-258. Lys-193 acts as the Proton acceptor in catalysis. Residue Arg-257 coordinates NADPH. NADPH contacts are provided by Val-281 and Glu-283.

This sequence belongs to the NAD-dependent glycerol-3-phosphate dehydrogenase family.

The protein localises to the cytoplasm. It catalyses the reaction sn-glycerol 3-phosphate + NAD(+) = dihydroxyacetone phosphate + NADH + H(+). It carries out the reaction sn-glycerol 3-phosphate + NADP(+) = dihydroxyacetone phosphate + NADPH + H(+). The protein operates within membrane lipid metabolism; glycerophospholipid metabolism. In terms of biological role, catalyzes the reduction of the glycolytic intermediate dihydroxyacetone phosphate (DHAP) to sn-glycerol 3-phosphate (G3P), the key precursor for phospholipid synthesis. The polypeptide is Glycerol-3-phosphate dehydrogenase [NAD(P)+] (Pelotomaculum thermopropionicum (strain DSM 13744 / JCM 10971 / SI)).